A 271-amino-acid chain; its full sequence is 4-hydroxy-tetrahydrodipicolinate reductase (271 aa).

Residues 10–15, E36, 100–102, and 124–127 contribute to the NAD(+) site; these read GAGGRM, GTT, and SGNM. The Proton donor/acceptor role is filled by H157. Position 158 (H158) interacts with (S)-2,3,4,5-tetrahydrodipicolinate. K161 acts as the Proton donor in catalysis. 167–168 contributes to the (S)-2,3,4,5-tetrahydrodipicolinate binding site; that stretch reads GT.

The protein belongs to the DapB family.

The protein localises to the cytoplasm. It carries out the reaction (S)-2,3,4,5-tetrahydrodipicolinate + NAD(+) + H2O = (2S,4S)-4-hydroxy-2,3,4,5-tetrahydrodipicolinate + NADH + H(+). It catalyses the reaction (S)-2,3,4,5-tetrahydrodipicolinate + NADP(+) + H2O = (2S,4S)-4-hydroxy-2,3,4,5-tetrahydrodipicolinate + NADPH + H(+). It functions in the pathway amino-acid biosynthesis; L-lysine biosynthesis via DAP pathway; (S)-tetrahydrodipicolinate from L-aspartate: step 4/4. Catalyzes the conversion of 4-hydroxy-tetrahydrodipicolinate (HTPA) to tetrahydrodipicolinate. This is 4-hydroxy-tetrahydrodipicolinate reductase from Rhodopseudomonas palustris (strain HaA2).